A 103-amino-acid chain; its full sequence is Small ribosomal subunit protein uS10 (103 aa).

It belongs to the universal ribosomal protein uS10 family. Part of the 30S ribosomal subunit.

Functionally, involved in the binding of tRNA to the ribosomes. This chain is Small ribosomal subunit protein uS10, found in Campylobacter hominis (strain ATCC BAA-381 / DSM 21671 / CCUG 45161 / LMG 19568 / NCTC 13146 / CH001A).